A 584-amino-acid chain; its full sequence is Alpha-glucosidase MAL12 (584 aa).

Asp-214 (nucleophile) is an active-site residue. Residue Glu-276 is the Proton donor of the active site.

Belongs to the glycosyl hydrolase 13 family.

The catalysed reaction is Hydrolysis of terminal, non-reducing (1-&gt;4)-linked alpha-D-glucose residues with release of alpha-D-glucose.. The sequence is that of Alpha-glucosidase MAL12 (MAL12) from Saccharomyces cerevisiae (strain ATCC 204508 / S288c) (Baker's yeast).